Reading from the N-terminus, the 469-residue chain is 3-isopropylmalate dehydratase large subunit (469 aa).

The [4Fe-4S] cluster site is built by C349, C410, and C413.

Belongs to the aconitase/IPM isomerase family. LeuC type 1 subfamily. Heterodimer of LeuC and LeuD. Requires [4Fe-4S] cluster as cofactor.

It catalyses the reaction (2R,3S)-3-isopropylmalate = (2S)-2-isopropylmalate. The protein operates within amino-acid biosynthesis; L-leucine biosynthesis; L-leucine from 3-methyl-2-oxobutanoate: step 2/4. In terms of biological role, catalyzes the isomerization between 2-isopropylmalate and 3-isopropylmalate, via the formation of 2-isopropylmaleate. The sequence is that of 3-isopropylmalate dehydratase large subunit from Neisseria meningitidis serogroup B (strain ATCC BAA-335 / MC58).